A 527-amino-acid polypeptide reads, in one-letter code: Peptidoglycan O-acetyltransferase (527 aa).

11 consecutive transmembrane segments (helical) span residues 11-31 (VFVL…VGFL), 55-75 (LFFY…SIVF), 96-116 (LILG…TDFF), 131-151 (LHLI…AYLM), 187-207 (HFLD…GPIV), 228-248 (NIAL…VIAD), 280-300 (LYFD…FFNI), 352-372 (LILV…FIIW), 397-417 (MPKI…WVFF), 463-483 (IMYA…SFCL), and 505-525 (LLLS…FLYF). Histidine 363 is a catalytic residue.

This sequence belongs to the membrane-bound acyltransferase family.

It is found in the cell membrane. In terms of biological role, catalyzes the O-acetylation of peptidoglycan (PG), an important mechanism that appears to confer lysozyme resistance and contributes to pathogen persistence in the host. The sequence is that of Peptidoglycan O-acetyltransferase (patA) from Helicobacter pylori (strain ATCC 700392 / 26695) (Campylobacter pylori).